The following is a 218-amino-acid chain: Putative pre-16S rRNA nuclease (218 aa).

It belongs to the YqgF nuclease family.

It localises to the cytoplasm. Its function is as follows. Could be a nuclease involved in processing of the 5'-end of pre-16S rRNA. In Thermotoga maritima (strain ATCC 43589 / DSM 3109 / JCM 10099 / NBRC 100826 / MSB8), this protein is Putative pre-16S rRNA nuclease.